The primary structure comprises 351 residues: Probable inactive tRNA-specific adenosine deaminase-like protein 3 (351 aa).

Met1 is subject to N-acetylmethionine. The interval 1–26 (MEPAPGLVEQPKCLEAGSPEPEPAPW) is disordered. One can recognise a CMP/dCMP-type deaminase domain in the interval 171–336 (AAMQSHMERA…PDLNHRFQVF (166 aa)). His223, Cys291, and Cys294 together coordinate Zn(2+).

This sequence belongs to the cytidine and deoxycytidylate deaminase family. ADAT3 subfamily. The cofactor is Zn(2+).

This is Probable inactive tRNA-specific adenosine deaminase-like protein 3 (ADAT3) from Homo sapiens (Human).